The chain runs to 486 residues: Protein nucleotidyltransferase YdiU (486 aa).

ATP-binding residues include Gly-90, Gly-92, Arg-93, Lys-113, Asp-125, Gly-126, Arg-176, and Arg-183. Asp-252 serves as the catalytic Proton acceptor. Mg(2+) contacts are provided by Asn-253 and Asp-262. Asp-262 provides a ligand contact to ATP.

It belongs to the SELO family. It depends on Mg(2+) as a cofactor. Mn(2+) is required as a cofactor.

The catalysed reaction is L-seryl-[protein] + ATP = 3-O-(5'-adenylyl)-L-seryl-[protein] + diphosphate. It carries out the reaction L-threonyl-[protein] + ATP = 3-O-(5'-adenylyl)-L-threonyl-[protein] + diphosphate. It catalyses the reaction L-tyrosyl-[protein] + ATP = O-(5'-adenylyl)-L-tyrosyl-[protein] + diphosphate. The enzyme catalyses L-histidyl-[protein] + UTP = N(tele)-(5'-uridylyl)-L-histidyl-[protein] + diphosphate. The catalysed reaction is L-seryl-[protein] + UTP = O-(5'-uridylyl)-L-seryl-[protein] + diphosphate. It carries out the reaction L-tyrosyl-[protein] + UTP = O-(5'-uridylyl)-L-tyrosyl-[protein] + diphosphate. Functionally, nucleotidyltransferase involved in the post-translational modification of proteins. It can catalyze the addition of adenosine monophosphate (AMP) or uridine monophosphate (UMP) to a protein, resulting in modifications known as AMPylation and UMPylation. This Pseudomonas putida (strain GB-1) protein is Protein nucleotidyltransferase YdiU.